Consider the following 590-residue polypeptide: Suprabasin (590 aa).

The signal sequence occupies residues 1–25 (MHLARLVGSCSLLLLLGALSGWAAS). 4 disordered regions span residues 182-213 (GNEAGRFGQGVHHAAGQAGNEAGRFGQGAHHG), 242-266 (FGQGAHHAAGQAGNEAGRFGQGVHH), 297-338 (GQGA…GVHH), and 545-570 (LNGNHQSGSSSHQGGATTTPLASGAS). Low complexity-rich tracts occupy residues 190-200 (QGVHHAAGQAG), 243-254 (GQGAHHAAGQAG), 297-330 (GQGAHHAAGQAGNEAGRFGQGAHHAAGQAGNEAG), and 546-559 (NGNHQSGSSSHQGG). Residues 560 to 570 (ATTTPLASGAS) show a composition bias toward polar residues.

As to expression, detected in thymus, uterus and esophagus.

Its subcellular location is the secreted. The protein is Suprabasin (SBSN) of Homo sapiens (Human).